A 653-amino-acid polypeptide reads, in one-letter code: Translation factor GUF1, mitochondrial (653 aa).

The tr-type G domain maps to 56-236 (ENYRNFSIVA…SIIKNIPAPN (181 aa)). GTP contacts are provided by residues 65 to 72 (AHVDHGKS), 129 to 133 (DTPGH), and 183 to 186 (NKID).

This sequence belongs to the TRAFAC class translation factor GTPase superfamily. Classic translation factor GTPase family. LepA subfamily.

It localises to the mitochondrion inner membrane. The enzyme catalyses GTP + H2O = GDP + phosphate + H(+). Its function is as follows. Promotes mitochondrial protein synthesis. May act as a fidelity factor of the translation reaction, by catalyzing a one-codon backward translocation of tRNAs on improperly translocated ribosomes. Binds to mitochondrial ribosomes in a GTP-dependent manner. The sequence is that of Translation factor GUF1, mitochondrial from Candida tropicalis (strain ATCC MYA-3404 / T1) (Yeast).